A 134-amino-acid polypeptide reads, in one-letter code: Small ribosomal subunit protein uS11 (134 aa).

The protein belongs to the universal ribosomal protein uS11 family. In terms of assembly, part of the 30S ribosomal subunit. Interacts with proteins S7 and S18. Binds to IF-3.

Functionally, located on the platform of the 30S subunit, it bridges several disparate RNA helices of the 16S rRNA. Forms part of the Shine-Dalgarno cleft in the 70S ribosome. In Micrococcus luteus (strain ATCC 4698 / DSM 20030 / JCM 1464 / CCM 169 / CCUG 5858 / IAM 1056 / NBRC 3333 / NCIMB 9278 / NCTC 2665 / VKM Ac-2230) (Micrococcus lysodeikticus), this protein is Small ribosomal subunit protein uS11.